Consider the following 476-residue polypeptide: ATP synthase subunit beta, chloroplastic (476 aa).

Residue 153–160 (GGAGVGKT) participates in ATP binding.

The protein belongs to the ATPase alpha/beta chains family. In terms of assembly, F-type ATPases have 2 components, CF(1) - the catalytic core - and CF(0) - the membrane proton channel. CF(1) has five subunits: alpha(3), beta(3), gamma(1), delta(1), epsilon(1). CF(0) has four main subunits: a(1), b(1), b'(1) and c(9-12).

The protein resides in the plastid. It localises to the chloroplast thylakoid membrane. It carries out the reaction ATP + H2O + 4 H(+)(in) = ADP + phosphate + 5 H(+)(out). Produces ATP from ADP in the presence of a proton gradient across the membrane. The catalytic sites are hosted primarily by the beta subunits. The sequence is that of ATP synthase subunit beta, chloroplastic from Dicksonia antarctica (Australian tree fern).